A 251-amino-acid polypeptide reads, in one-letter code: Homeobox protein notochord (251 aa).

Residues Met-1–Pro-14 are compositionally biased toward pro residues. The disordered stretch occupies residues Met-1–Ser-47. Positions Ser-15 to Gly-35 are enriched in low complexity. Positions Gln-156–Gln-215 form a DNA-binding region, homeobox. Residues Ala-224–Ser-242 are compositionally biased toward low complexity. Positions Ala-224 to Gly-251 are disordered.

Its subcellular location is the nucleus. Functionally, transcription regulator acting downstream of both FOXA2 and Brachyury (T) during notochord development. Required for node morphogenesis. Is essential for cilia formation in the posterior notochord (PNC) and for left-right patterning; acts upstream of FOXJ1 and RFX3 in this process and is required for the expression of various components important for axonemal assembly and function. Plays a role in regulating axial versus paraxial cell fate. Activates the transcription of ciliary proteins C11orf97 homolog, FAM183B and SPACA9 in the embryonic ventral node. This Homo sapiens (Human) protein is Homeobox protein notochord (NOTO).